The following is a 251-amino-acid chain: 5'-nucleotidase SurE (251 aa).

Positions 8, 9, 40, and 95 each coordinate a divalent metal cation.

Belongs to the SurE nucleotidase family. The cofactor is a divalent metal cation.

It is found in the cytoplasm. It carries out the reaction a ribonucleoside 5'-phosphate + H2O = a ribonucleoside + phosphate. Nucleotidase that shows phosphatase activity on nucleoside 5'-monophosphates. This Maridesulfovibrio salexigens (strain ATCC 14822 / DSM 2638 / NCIMB 8403 / VKM B-1763) (Desulfovibrio salexigens) protein is 5'-nucleotidase SurE.